The following is a 494-amino-acid chain: 4-hydroxyphenylacetate 3-monooxygenase oxygenase component (494 aa).

Substrate is bound by residues 103 to 107 and histidine 149; that span reads RSPDY. Residues 149 to 151, 155 to 158, and threonine 192 contribute to the FAD site; these read HTL and QMNR. 205–206 is a substrate binding site; sequence ST. 455-458 contributes to the FAD binding site; that stretch reads DPVR.

This sequence belongs to the FADH(2)-utilizing monooxygenase family. As to quaternary structure, 4-HPA 3-monooxygenase consists of a reductase component HpaI and an oxygenase component HpaH.

It carries out the reaction 4-hydroxyphenylacetate + FADH2 + O2 = 3,4-dihydroxyphenylacetate + FAD + H2O + H(+). Its pathway is aromatic compound metabolism; 4-hydroxyphenylacetate degradation; pyruvate and succinate semialdehyde from 4-hydroxyphenylacetate: step 1/7. Functionally, utilizes FADH(2) supplied by HpaI, to catalyze the hydroxylation of 4-hydroxyphenylacetic acid, leading to the production of 3,4-dihydroxyphenylacetic acid (DHPA). The protein is 4-hydroxyphenylacetate 3-monooxygenase oxygenase component (hpaH) of Geobacillus sp. (strain PA-9).